Consider the following 866-residue polypeptide: Sphingomyelin phosphodiesterase 4 (866 aa).

Ser169 and Ser285 each carry phosphoserine. Phosphothreonine is present on Thr708. The residue at position 792 (Ser792) is a Phosphoserine. The chain crosses the membrane as a helical span at residues 822 to 842 (LLLAFFVASLFCVGPLPCTLL).

Mg(2+) is required as a cofactor. In terms of tissue distribution, widely expressed, with highest levels in heart and skeletal muscle. As to expression, expressed in skeletal muscle (at protein level). Expressed in skeletal muscle but a lower levels than isoform 1 (at protein level).

It localises to the endoplasmic reticulum membrane. The protein localises to the golgi apparatus membrane. Its subcellular location is the nucleus envelope. The protein resides in the cell membrane. It is found in the sarcolemma. The enzyme catalyses a sphingomyelin + H2O = phosphocholine + an N-acylsphing-4-enine + H(+). With respect to regulation, activated by phosphatidylserine and tumor necrosis factor (TNF). Inhibited by scyphostatin. Functionally, catalyzes the hydrolysis of membrane sphingomyelin to form phosphorylcholine and ceramide. It has a relevant role in the homeostasis of membrane sphingolipids, thereby influencing membrane integrity, and endoplasmic reticulum organization and function. May sensitize cells to DNA damage-induced apoptosis. In skeletal muscle, mediates TNF-stimulated oxidant production. This is Sphingomyelin phosphodiesterase 4 from Homo sapiens (Human).